A 340-amino-acid chain; its full sequence is Tetrathionate reductase subunit C (340 aa).

9 helical membrane passes run 19–39 (WLPW…AALF), 57–77 (ALLI…ADLH), 94–114 (WMPW…LWFL), 128–148 (VTKW…IYTG), 164–184 (AFPV…MIVA), 195–215 (ILWG…MWVS), 236–256 (YYAV…SLAL), 266–286 (VLLV…LLIQ), and 306–326 (TDGW…LIII).

Belongs to the NrfD family. As to quaternary structure, probably composed of three subunits: TtrA, TtrB and TtrC.

The protein resides in the cell inner membrane. Part of a membrane-bound tetrathionate reductase that catalyzes the reduction of tetrathionate to thiosulfate. TtrC probably anchors TtrA and TtrB to the periplasmic face of the cytoplasmic membrane. May transfer electrons from membrane quinol to TtrB. During mice infection, the ability to use tetrathionate as an electron acceptor is a growth advantage for S.typhimurium over the competing microbiota in the lumen of the inflamed gut. The protein is Tetrathionate reductase subunit C (ttrC) of Salmonella typhimurium (strain LT2 / SGSC1412 / ATCC 700720).